Reading from the N-terminus, the 773-residue chain is Beta-hexosaminidase B (773 aa).

The first 19 residues, 1 to 19 (MKFNRLMALLFGVSSPLYA), serve as a signal peptide directing secretion. 3 disulfide bridges follow: cysteine 46/cysteine 53, cysteine 389/cysteine 397, and cysteine 496/cysteine 542. The Proton donor role is filled by glutamate 531.

Belongs to the glycosyl hydrolase 20 family.

The catalysed reaction is Hydrolysis of terminal non-reducing N-acetyl-D-hexosamine residues in N-acetyl-beta-D-hexosaminides.. The sequence is that of Beta-hexosaminidase B (nag096) from Pseudoalteromonas piscicida.